The following is a 305-amino-acid chain: MNRLLKTIIENNRKWISEGKVASYIPELSKMDKNLLGISVCTLGGEEYWEGDAEVKFTIQSISKIVTLMLAIIDNGEDYVFSKVGMEPTETAFNSIVNLEAKESHKPINPMINAGAIVVASMVAGKDSDEKFDRILKFTRKISGNNDIDINLNVYESEKETGHRNRALAYFMKSTGALKGNVEEILDVYFKQCSIEITCKDLARIGVMLANDGVSPYTGDRIVPRHVARIVKTIMVTCGMYDASGNFAVHIGIPAKSGVGGGIIACAPRRMGIGVLGTALDEKGNSIAGTKILEELSKQLDLSIF.

Serine 61, asparagine 113, glutamate 158, asparagine 165, tyrosine 189, tyrosine 241, and valine 259 together coordinate substrate.

Belongs to the glutaminase family. In terms of assembly, homotetramer.

It catalyses the reaction L-glutamine + H2O = L-glutamate + NH4(+). The chain is Glutaminase from Clostridium botulinum (strain ATCC 19397 / Type A).